The chain runs to 153 residues: SsrA-binding protein (153 aa).

This sequence belongs to the SmpB family.

It is found in the cytoplasm. Required for rescue of stalled ribosomes mediated by trans-translation. Binds to transfer-messenger RNA (tmRNA), required for stable association of tmRNA with ribosomes. tmRNA and SmpB together mimic tRNA shape, replacing the anticodon stem-loop with SmpB. tmRNA is encoded by the ssrA gene; the 2 termini fold to resemble tRNA(Ala) and it encodes a 'tag peptide', a short internal open reading frame. During trans-translation Ala-aminoacylated tmRNA acts like a tRNA, entering the A-site of stalled ribosomes, displacing the stalled mRNA. The ribosome then switches to translate the ORF on the tmRNA; the nascent peptide is terminated with the 'tag peptide' encoded by the tmRNA and targeted for degradation. The ribosome is freed to recommence translation, which seems to be the essential function of trans-translation. The chain is SsrA-binding protein from Orientia tsutsugamushi (strain Boryong) (Rickettsia tsutsugamushi).